The primary structure comprises 133 residues: Small ribosomal subunit protein uS8 (133 aa).

Belongs to the universal ribosomal protein uS8 family. In terms of assembly, part of the 30S ribosomal subunit. Contacts proteins S5 and S12.

Functionally, one of the primary rRNA binding proteins, it binds directly to 16S rRNA central domain where it helps coordinate assembly of the platform of the 30S subunit. The protein is Small ribosomal subunit protein uS8 of Synechocystis sp. (strain ATCC 27184 / PCC 6803 / Kazusa).